The following is a 144-amino-acid chain: D-aminoacyl-tRNA deacylase (144 aa).

The Gly-cisPro motif, important for rejection of L-amino acids motif lies at glycine 136 to proline 137.

The protein belongs to the DTD family. In terms of assembly, homodimer.

It is found in the cytoplasm. The enzyme catalyses glycyl-tRNA(Ala) + H2O = tRNA(Ala) + glycine + H(+). The catalysed reaction is a D-aminoacyl-tRNA + H2O = a tRNA + a D-alpha-amino acid + H(+). Functionally, an aminoacyl-tRNA editing enzyme that deacylates mischarged D-aminoacyl-tRNAs. Also deacylates mischarged glycyl-tRNA(Ala), protecting cells against glycine mischarging by AlaRS. Acts via tRNA-based rather than protein-based catalysis; rejects L-amino acids rather than detecting D-amino acids in the active site. By recycling D-aminoacyl-tRNA to D-amino acids and free tRNA molecules, this enzyme counteracts the toxicity associated with the formation of D-aminoacyl-tRNA entities in vivo and helps enforce protein L-homochirality. The chain is D-aminoacyl-tRNA deacylase from Vibrio atlanticus (strain LGP32) (Vibrio splendidus (strain Mel32)).